Reading from the N-terminus, the 327-residue chain is MQIKRLIEKIPGGMMLVPLFLGALCHTFSPGAGKYFGSFTNGMITGTVPILAVWFFCMGASIKLSATGTVLRKSGTLVVTKIAVAWVVAAIASRIIPEHGVEVGFFAGLSTLALVAAMDMTNGGLYASIMQQYGTKEEAGAFVLMSLESGPLMTMIILGTAGIASFEPHVFVGAVLPFLVGFALGNLDPELREFFSKAVQTLIPFFAFALGNTIDLTVIAQTGLLGILLGVAVIIVTGIPLIIADKLIGGGDGTAGIAASSSAGAAVATPVLIAEMVPAFKPMAPAATSLVATAVIVTSILVPILTSIWSRKVKARAAKIEILGTVK.

Transmembrane regions (helical) follow at residues 10-30, 42-62, 73-93, 95-115, 139-159, 163-183, 199-219, 224-244, 254-274, and 289-309; these read IPGG…TFSP, GMIT…GASI, KSGT…AIAS, IIPE…LALV, AGAF…IILG, IASF…VGFA, VQTL…LTVI, LLGI…LIIA, TAGI…VLIA, and SLVA…TSIW.

Belongs to the KdgT transporter family.

The protein resides in the cell inner membrane. It carries out the reaction 2-dehydro-3-deoxy-D-gluconate(in) + H(+)(in) = 2-dehydro-3-deoxy-D-gluconate(out) + H(+)(out). Functionally, catalyzes the proton-dependent uptake of 2-keto-3-deoxygluconate (KDG) into the cell. This is 2-keto-3-deoxygluconate permease from Escherichia coli O157:H7.